The chain runs to 222 residues: Ornithine decarboxylase antizyme 1 (222 aa).

This sequence belongs to the ODC antizyme family. In terms of assembly, interacts with ODC1 and thereby sterically blocks ODC homodimerization. Forms a ternary complex with PSMB4 and OAZ1 before PSMB4 is incorporated into the 20S proteasome. Interacts with AZIN2; this interaction disrupts the interaction between the antizyme and ODC1. Interacts with FAM171A1.

Its function is as follows. Ornithine decarboxylase (ODC) antizyme protein that negatively regulates ODC activity and intracellular polyamine biosynthesis and uptake in response to increased intracellular polyamine levels. Binds to ODC monomers, inhibiting the assembly of the functional ODC homodimer, and targets the monomers for ubiquitin-independent proteolytic destruction by the 26S proteasome. Triggers ODC degradation by inducing the exposure of a cryptic proteasome-interacting surface of ODC. Stabilizes AZIN2 by interfering with its ubiquitination. Also inhibits cellular uptake of polyamines by inactivating the polyamine uptake transporter. SMAD1/OAZ1/PSMB4 complex mediates the degradation of the CREBBP/EP300 repressor SNIP1. Involved in the translocation of AZIN2 from ER-Golgi intermediate compartment (ERGIC) to the cytosol. The sequence is that of Ornithine decarboxylase antizyme 1 (OAZ1) from Mesocricetus auratus (Golden hamster).